The primary structure comprises 207 residues: Small ribosomal subunit protein uS4 (207 aa).

Residues 31–55 (KCKLDSKPGQHGRTSGARTSDYGTQ) form a disordered region. A compositionally biased stretch (polar residues) spans 42–53 (GRTSGARTSDYG). The 64-residue stretch at 97 to 160 (SRLDNVVYRM…KKQARIIEAL (64 aa)) folds into the S4 RNA-binding domain.

Belongs to the universal ribosomal protein uS4 family. As to quaternary structure, part of the 30S ribosomal subunit. Contacts protein S5. The interaction surface between S4 and S5 is involved in control of translational fidelity.

Its function is as follows. One of the primary rRNA binding proteins, it binds directly to 16S rRNA where it nucleates assembly of the body of the 30S subunit. With S5 and S12 plays an important role in translational accuracy. The sequence is that of Small ribosomal subunit protein uS4 from Burkholderia vietnamiensis (strain G4 / LMG 22486) (Burkholderia cepacia (strain R1808)).